A 949-amino-acid chain; its full sequence is ATPase 6, plasma membrane-type (949 aa).

The Cytoplasmic segment spans residues 1–64; the sequence is MAADISWDEI…EKVENKFLKF (64 aa). A helical membrane pass occupies residues 65–84; it reads LGFMWNPLSWVMEAAAIMAI. Topologically, residues 85–96 are extracellular; that stretch reads VLANGGGRPPDW. A helical membrane pass occupies residues 97–117; the sequence is QDFVGITCLLIINSTISFIEE. Residues 118–246 are Cytoplasmic-facing; the sequence is NNAGNAAAAL…GHFQKVLTAI (129 aa). Residues 247 to 267 traverse the membrane as a helical segment; the sequence is GNFCICSIGIGMLIEIIIMYP. Topologically, residues 268 to 276 are extracellular; the sequence is IQHRKYRDG. The chain crosses the membrane as a helical span at residues 277-294; sequence IDNLLVLLIGGIPIAMPT. At 295–645 the chain is on the cytoplasmic side; that stretch reads VLSVTMAIGS…TSRAIFQRMK (351 aa). Catalysis depends on aspartate 332, which acts as the 4-aspartylphosphate intermediate. Mg(2+) is bound by residues aspartate 590 and aspartate 594. A helical transmembrane segment spans residues 646-667; that stretch reads NYTIYAVSITIRIVLGFMLVAL. Residues 668-672 are Extracellular-facing; that stretch reads IWEFD. A helical transmembrane segment spans residues 673-695; that stretch reads FSPFMVLIIAILNDGTIMTISKD. Over 696 to 711 the chain is Cytoplasmic; it reads RVKPSPIPDSWKLKEI. Residues 712–732 form a helical membrane-spanning segment; it reads FATGVVLGTYMALVTVVFFWL. At 733–753 the chain is on the extracellular side; it reads AHDTTFFSDKFGVRSLQGKDE. The chain crosses the membrane as a helical span at residues 754–774; sequence ELIAVLYLQVSIISQALIFVT. At 775–786 the chain is on the cytoplasmic side; sequence RSRSWSFVERPG. The chain crosses the membrane as a helical span at residues 787-807; it reads LLLLIAFFVAQLIATLIATYA. The Extracellular portion of the chain corresponds to 808 to 815; it reads HWEFARIK. Residues 816–836 traverse the membrane as a helical segment; the sequence is GCGWGWCGVIWIYSIVTYIPL. The Cytoplasmic portion of the chain corresponds to 837–949; that stretch reads DILKFITRYT…IDNLNQHYTV (113 aa). Threonine 883 carries the phosphothreonine modification. Serine 931 carries the phosphoserine modification. Residues 947 to 949 form an interaction with 14-3-3 proteins region; that stretch reads YTV. Threonine 948 carries the phosphothreonine modification.

Belongs to the cation transport ATPase (P-type) (TC 3.A.3) family. Type IIIA subfamily. Binds to 14-3-3 proteins. The binding is induced by phosphorylation of Thr-948. Binding to 14-3-3 proteins activates the H(+)-ATPase. In terms of tissue distribution, expressed in guard cells.

It localises to the membrane. It carries out the reaction ATP + H2O + H(+)(in) = ADP + phosphate + 2 H(+)(out). Its function is as follows. The plasma membrane H(+) ATPase of plants and fungi generates a proton gradient that drives the active transport of nutrients by H(+)-symport. The resulting external acidification and/or internal alkinization may mediate growth responses. The polypeptide is ATPase 6, plasma membrane-type (AHA6) (Arabidopsis thaliana (Mouse-ear cress)).